The following is a 420-amino-acid chain: E3 ubiquitin protein ligase DRIP2 (420 aa).

The RING-type zinc-finger motif lies at Cys-20–Asp-61. The segment covering Ile-113–Val-123 has biased composition (polar residues). 2 disordered regions span residues Ile-113–Asp-201 and Asp-226–Asp-289. Residues Lys-154–Glu-165 are compositionally biased toward basic and acidic residues. 2 stretches are compositionally biased toward polar residues: residues Ser-166 to Asn-194 and Gly-232 to Ser-242. Basic residues predominate over residues Thr-244–Cys-253. Residues Ser-260–Leu-273 are compositionally biased toward polar residues. The span at Lys-274–Ser-284 shows a compositional bias: basic residues.

Interacts with DREB2A. Auto-ubiquitinated. As to expression, expressed in roots, leaves and flowers.

It carries out the reaction S-ubiquitinyl-[E2 ubiquitin-conjugating enzyme]-L-cysteine + [acceptor protein]-L-lysine = [E2 ubiquitin-conjugating enzyme]-L-cysteine + N(6)-ubiquitinyl-[acceptor protein]-L-lysine.. It functions in the pathway protein modification; protein ubiquitination. E3 ubiquitin-protein ligase that acts as a negative regulator of the response to water stress. Mediates ubiquitination and subsequent proteasomal degradation of the drought-induced transcriptional activator DREB2A. Functionally redundant with DRIP1. In Arabidopsis thaliana (Mouse-ear cress), this protein is E3 ubiquitin protein ligase DRIP2 (DRIP2).